A 962-amino-acid chain; its full sequence is Ubiquitin carboxyl-terminal hydrolase 4 (962 aa).

One can recognise a DUSP domain in the interval P11 to V122. The segment at T27–E216 is necessary for interaction with SART3. The Nuclear export signal signature appears at V133 to K141. The Ubiquitin-like 1 domain occupies L142 to R226. A disordered region spans residues E220–A249. The span at P225–A249 shows a compositional bias: polar residues. A required for USP4 activation by providing conformational flexibility between the DUSP and catalytic domains region spans residues L229–P295. Residues C302–R922 enclose the USP domain. Residue C311 is the Nucleophile of the active site. The interval P384–F386 is regulates ubiquitin dissociation. The necessary for interaction with RBL2 stretch occupies residues L405–E407. At S445 the chain carries Phosphoserine. Residues L459–E463 form a necessary for interaction with RB1 and RBL2 region. Zn(2+) contacts are provided by C461 and C464. The Ubiquitin-like 2 domain occupies L483–S571. Positions K485–A774 are interacts with DUSP and ubiquitin-like 1 domains and is required for USP4 activation. The segment at E638–Q699 is disordered. S655 is subject to Phosphoserine. A compositionally biased stretch (acidic residues) spans E657 to H666. Residues S675 and S680 each carry the phosphoserine modification. The short motif at Q766–K771 is the Nuclear localization signal element. C798 and C801 together coordinate Zn(2+). Catalysis depends on H880, which acts as the Proton acceptor. Residues S928–G937 show a composition bias toward low complexity. The interval S928–N962 is disordered. A compositionally biased stretch (acidic residues) spans G952–N962.

The protein belongs to the peptidase C19 family. USP4 subfamily. Interacts with RB1 (both dephosphorylated and hypophosphorylated forms). Interacts with RBL1 and RBL2. Interacts with ADORA2A (via cytoplasmic C-terminus); the interaction is direct. Interacts with SART3; recruits USP4 to its substrate PRPF3. In terms of processing, phosphorylated at Ser-445 by PKB/AKT1 in response to EGF stimulus, promoting its ability deubiquitinate RHEB. Post-translationally, monoubiquitinated by TRIM21. Ubiquitination does not lead to its proteasomal degradation. Autodeubiquitinated. Expressed in brain, kidney, liver and spleen (at protein level).

The protein localises to the cytoplasm. Its subcellular location is the nucleus. The enzyme catalyses Thiol-dependent hydrolysis of ester, thioester, amide, peptide and isopeptide bonds formed by the C-terminal Gly of ubiquitin (a 76-residue protein attached to proteins as an intracellular targeting signal).. With respect to regulation, the completion of the deubiquitinase reaction is mediated by the DUSP and ubiquitin-like 1 domains which promotes the release of ubiquitin from the catalytic site enabling subsequent reactions to occur. In terms of biological role, deubiquitinating enzyme that removes conjugated ubiquitin from target proteins. Deubiquitinates PDPK1. Deubiquitinates TRIM21. Deubiquitinates receptor ADORA2A which increases the amount of functional receptor at the cell surface. Deubiquitinates HAS2. Deubiquitinates RHEB in response to EGF signaling, promoting mTORC1 signaling. May regulate mRNA splicing through deubiquitination of the U4 spliceosomal protein PRPF3. This may prevent its recognition by the U5 component PRPF8 thereby destabilizing interactions within the U4/U6.U5 snRNP. May also play a role in the regulation of quality control in the ER. This chain is Ubiquitin carboxyl-terminal hydrolase 4 (Usp4), found in Mus musculus (Mouse).